We begin with the raw amino-acid sequence, 132 residues long: Protein NrdI (132 aa).

Belongs to the NrdI family.

Functionally, probably involved in ribonucleotide reductase function. The sequence is that of Protein NrdI from Staphylococcus haemolyticus (strain JCSC1435).